The primary structure comprises 691 residues: tRNA-dihydrouridine(47) synthase [NAD(P)(+)]-like (691 aa).

Residue serine 2 is modified to N-acetylserine. The tract at residues 55–94 (PPPPSRSVKQNDAADVRAPQSGLVQEKKSKRQLKRERREQ) is disordered. 2 consecutive C3H1-type zinc fingers follow at residues 94-125 (QSTINLCPQVARTEDVDSCQYKDKCRFNHDIE) and 138-163 (QCPFVASGMKCAYGLSCRFLGSHRDI). Residues 259–286 (LETEEVRPMKKAKSEDQKNSKTGDVGGV) are disordered. The segment covering 262–279 (EEVRPMKKAKSEDQKNSK) has biased composition (basic and acidic residues). Residues 344-346 (PLT) and glutamine 398 each bind FMN. Catalysis depends on cysteine 429, which acts as the Proton donor. Residues lysine 468, histidine 498, 531 to 533 (NGD), and 556 to 557 (AR) contribute to the FMN site.

It belongs to the Dus family. Dus3 subfamily. The cofactor is FMN.

The enzyme catalyses 5,6-dihydrouridine(47) in tRNA + NAD(+) = uridine(47) in tRNA + NADH + H(+). The catalysed reaction is 5,6-dihydrouridine(47) in tRNA + NADP(+) = uridine(47) in tRNA + NADPH + H(+). It carries out the reaction a 5,6-dihydrouridine in mRNA + NAD(+) = a uridine in mRNA + NADH + H(+). It catalyses the reaction a 5,6-dihydrouridine in mRNA + NADP(+) = a uridine in mRNA + NADPH + H(+). Its function is as follows. Catalyzes the synthesis of dihydrouridine, a modified base found in the D-loop of most tRNAs. Specifically modifies U47 in cytoplasmic tRNAs. Catalyzes the synthesis of dihydrouridine in some mRNAs, thereby affecting their translation. The protein is tRNA-dihydrouridine(47) synthase [NAD(P)(+)]-like of Arabidopsis thaliana (Mouse-ear cress).